We begin with the raw amino-acid sequence, 214 residues long: Membrane-spanning 4-domains subfamily A member 3 (214 aa).

The segment at 1-31 (MASHEVDNAELGSASAHGTPGSEAGPEELNT) is disordered. Residues 1 to 49 (MASHEVDNAELGSASAHGTPGSEAGPEELNTSVYQPIDGSPDYQKAKLQ) lie on the Cytoplasmic side of the membrane. A helical transmembrane segment spans residues 50–70 (VLGAIQILNAAMILALGVFLG). Topologically, residues 71–81 (SLQYPYHFQKH) are extracellular. A helical membrane pass occupies residues 82–102 (FFFFTFYTGYPIWGAVFFCSS). The Cytoplasmic segment spans residues 103–124 (GTLSVVAGIKPTRTWIQNSFGM). A helical membrane pass occupies residues 125-145 (NIASATIALVGTAFLSLNIAV). Residues 146 to 175 (NIQSLRSCHSSSESPDLCNYMGSISNGMVS) are Extracellular-facing. The helical transmembrane segment at 176–196 (LLLILTLLELCVTISTIAMWC) threads the bilayer. At 197-214 (NANCCNSREEISSPPNSV) the chain is on the cytoplasmic side.

The protein belongs to the MS4A family. Interacts with CDKN3. Interacts with CDKN3-CDK2 complexes through its binding to CDKN3; this interaction facilitates dissociation of cyclin A from CDKN3-CDK2 complexes. In terms of tissue distribution, expressed specifically in hematopoietic cells and tissues.

Its subcellular location is the endomembrane system. The protein resides in the cytoplasm. The protein localises to the perinuclear region. Functionally, hematopoietic modulator for the G1-S cell cycle transition. Modulates the level of phosphorylation of cyclin-dependent kinase 2 (CDK2) through its direct binding to cyclin-dependent kinase inhibitor 3 (CDKN3/KAP). In Homo sapiens (Human), this protein is Membrane-spanning 4-domains subfamily A member 3 (MS4A3).